Reading from the N-terminus, the 380-residue chain is 3-dehydroquinate synthase (380 aa).

Belongs to the archaeal-type DHQ synthase family.

The enzyme catalyses 2-amino-2,3,7-trideoxy-D-lyxo-hept-6-ulosonate + NAD(+) + H2O = 3-dehydroquinate + NH4(+) + NADH + H(+). Its function is as follows. Catalyzes the oxidative deamination and cyclization of 2-amino-3,7-dideoxy-D-threo-hept-6-ulosonic acid (ADH) to yield 3-dehydroquinate (DHQ), which is fed into the canonical shikimic pathway of aromatic amino acid biosynthesis. The protein is 3-dehydroquinate synthase of Methanosarcina mazei (strain ATCC BAA-159 / DSM 3647 / Goe1 / Go1 / JCM 11833 / OCM 88) (Methanosarcina frisia).